The following is a 379-amino-acid chain: MANLRKTHPLLKIANDALVDLPTPSNISAWWNFGSLLGLCLISQILTGLFLAMHYTSDISTAFSSVAHICRDVNYGWLIRNLHANGASFFFICLYLHIARGLYYGSYLYMETWNIGVVLFLLVMMTAFVGYVLPWGQMSFWGATVITNLLSAVPYVGNSLVQWIWGGFSVDNATLTRFFAFHFLFPFVVAGATMLHLLFLHETGSNNPVGLNSDADKIPFHPYFSYKDLLGFIIMLTALTMLALFYPNLLGDPDNFTPANPMVTPPHIKPEWYFLFAYAILRSIPNKLGGVLALLSSILVLMVVPILHTSKQRGLTFRPASQLLFWILVADMLVLTWIGGMPVEHPYIIIGQVASVLYFSLFLVLNPLVGWLENKVMNW.

The next 4 membrane-spanning stretches (helical) occupy residues 33–53 (FGSL…FLAM), 77–98 (WLIR…YLHI), 113–133 (WNIG…GYVL), and 178–198 (FFAF…LHLL). Residues H83 and H97 each coordinate heme b. Positions 182 and 196 each coordinate heme b. H201 serves as a coordination point for a ubiquinone. 4 helical membrane passes run 226 to 246 (YKDL…ALFY), 288 to 308 (LGGV…PILH), 320 to 340 (ASQL…WIGG), and 347 to 367 (YIII…VLNP).

Belongs to the cytochrome b family. The cytochrome bc1 complex contains 3 respiratory subunits (MT-CYB, CYC1 and UQCRFS1), 2 core proteins (UQCRC1 and UQCRC2) and probably 6 low-molecular weight proteins. Heme b is required as a cofactor.

It localises to the mitochondrion inner membrane. Functionally, component of the ubiquinol-cytochrome c reductase complex (complex III or cytochrome b-c1 complex) that is part of the mitochondrial respiratory chain. The b-c1 complex mediates electron transfer from ubiquinol to cytochrome c. Contributes to the generation of a proton gradient across the mitochondrial membrane that is then used for ATP synthesis. In Anguilla anguilla (European freshwater eel), this protein is Cytochrome b (mt-cyb).